The primary structure comprises 94 residues: Co-chaperonin GroES (94 aa).

In terms of assembly, heptamer of 7 subunits arranged in a ring. Interacts with the chaperonin GroEL.

Its subcellular location is the cytoplasm. Together with the chaperonin GroEL, plays an essential role in assisting protein folding. The GroEL-GroES system forms a nano-cage that allows encapsulation of the non-native substrate proteins and provides a physical environment optimized to promote and accelerate protein folding. GroES binds to the apical surface of the GroEL ring, thereby capping the opening of the GroEL channel. In Thermoanaerobacter brockii (Thermoanaerobium brockii), this protein is Co-chaperonin GroES.